The sequence spans 143 residues: Peptide methionine sulfoxide reductase MsrB (143 aa).

Residues 16–139 enclose the MsrB domain; that stretch reads DAELRRRLTP…NSAALNFESR (124 aa). Cys-55, Cys-58, Cys-104, and Cys-107 together coordinate Zn(2+). Cys-128 (nucleophile) is an active-site residue.

The protein belongs to the MsrB Met sulfoxide reductase family. Zn(2+) is required as a cofactor.

The enzyme catalyses L-methionyl-[protein] + [thioredoxin]-disulfide + H2O = L-methionyl-(R)-S-oxide-[protein] + [thioredoxin]-dithiol. The polypeptide is Peptide methionine sulfoxide reductase MsrB (Burkholderia multivorans (strain ATCC 17616 / 249)).